Here is a 568-residue protein sequence, read N- to C-terminus: Probable pectinesterase/pectinesterase inhibitor 23 (568 aa).

Positions 1-33 (MGSDGDKKKKFIVAGSVSGFLVIMVVSVAVVTS) are cleaved as a signal peptide. The pectinesterase inhibitor 23 stretch occupies residues 45 to 198 (RKTTKAVQAV…RELSSNSLAM (154 aa)). N-linked (GlcNAc...) asparagine glycans are attached at residues Asn94, Asn210, and Asn316. The pectinesterase 23 stretch occupies residues 251–548 (PGPVKANAVV…PQDALLYTGD (298 aa)). Residues Thr333 and Gln363 each coordinate substrate. Catalysis depends on Asp386, which acts as the Proton donor; for pectinesterase activity. A disulfide bridge connects residues Cys400 and Cys420. Asp407 functions as the Nucleophile; for pectinesterase activity in the catalytic mechanism. Arg475 and Trp477 together coordinate substrate.

This sequence in the N-terminal section; belongs to the PMEI family. It in the C-terminal section; belongs to the pectinesterase family. As to expression, expressed in mature pollen grains in the anthers and on the stigma. Found in pollen tubes within the style.

It is found in the secreted. Its subcellular location is the cell wall. It carries out the reaction [(1-&gt;4)-alpha-D-galacturonosyl methyl ester](n) + n H2O = [(1-&gt;4)-alpha-D-galacturonosyl](n) + n methanol + n H(+). Its pathway is glycan metabolism; pectin degradation; 2-dehydro-3-deoxy-D-gluconate from pectin: step 1/5. Its function is as follows. Acts in the modification of cell walls via demethylesterification of cell wall pectin. The protein is Probable pectinesterase/pectinesterase inhibitor 23 (PME23) of Arabidopsis thaliana (Mouse-ear cress).